A 119-amino-acid chain; its full sequence is Integration host factor subunit alpha (119 aa).

The segment at 96–119 (INGQQANGKMNGESAPSEFSAETE) is disordered.

It belongs to the bacterial histone-like protein family. In terms of assembly, heterodimer of an alpha and a beta chain.

In terms of biological role, this protein is one of the two subunits of integration host factor, a specific DNA-binding protein that functions in genetic recombination as well as in transcriptional and translational control. In Bradyrhizobium sp. (strain ORS 278), this protein is Integration host factor subunit alpha.